Here is a 96-residue protein sequence, read N- to C-terminus: Prokineticin Bm8-e (96 aa).

The signal sequence occupies residues 1 to 19 (MKCFAQIVVLLLVIAFSHG). Disulfide bonds link cysteine 26/cysteine 38, cysteine 32/cysteine 50, cysteine 37/cysteine 78, cysteine 60/cysteine 86, and cysteine 80/cysteine 95.

This sequence belongs to the AVIT (prokineticin) family. As to expression, expressed by the skin glands.

The protein localises to the secreted. In terms of biological role, potent agonist for both PKR1/PROKR1 and PKR2/PROKR2, and inducer of a potent and long-lasting hyperalgesia. Also potentiates capsaicin-induced TRPV1 current, when tested on DRG neurons. At subnanomolar concentrations, this protein both induces potent chemotaxis of macrophages and stimulates LPS-induced production of the pro-inflammatory cytokines IL-1 and IL-12. In vivo, potently stimulates the contraction of the guinea-pig gastrointestinal (GI) smooth muscle (nanomolar concentration). This is Prokineticin Bm8-e from Bombina maxima (Giant fire-bellied toad).